The primary structure comprises 425 residues: Alpha-(1,3)-fucosyltransferase C (425 aa).

Topologically, residues Met-1–Arg-37 are cytoplasmic. Residues Gly-38 to Thr-58 traverse the membrane as a helical; Signal-anchor for type II membrane protein segment. The Lumenal segment spans residues Gln-59–Leu-425. N-linked (GlcNAc...) asparagine glycans are attached at residues Asn-187 and Asn-230.

It belongs to the glycosyltransferase 10 family.

It localises to the golgi apparatus. The protein resides in the golgi stack membrane. It functions in the pathway protein modification; protein glycosylation. In Drosophila melanogaster (Fruit fly), this protein is Alpha-(1,3)-fucosyltransferase C (FucTC).